The chain runs to 202 residues: PXMP2/4 family protein 1 (202 aa).

4 consecutive transmembrane segments (helical) span residues 21–41 (PVIT…TLAQ), 54–72 (LMMC…HFWF), 138–154 (KAWM…FRFV), and 161–177 (LISN…LSTV).

Belongs to the peroxisomal membrane protein PXMP2/4 family.

The protein resides in the membrane. In Dictyostelium discoideum (Social amoeba), this protein is PXMP2/4 family protein 1.